A 226-amino-acid polypeptide reads, in one-letter code: ATP synthase F(0) complex subunit a (226 aa).

6 helical membrane-spanning segments follow: residues 6–26, 68–88, 97–117, 138–158, 164–184, and 200–222; these read FASF…IVLF, WTLM…LGLL, QLSM…ITGF, IPML…ALAV, ITAG…LMSI, and TILE…SLYL.

It belongs to the ATPase A chain family. Component of the ATP synthase complex composed at least of ATP5F1A/subunit alpha, ATP5F1B/subunit beta, ATP5MC1/subunit c (homooctomer), MT-ATP6/subunit a, MT-ATP8/subunit 8, ATP5ME/subunit e, ATP5MF/subunit f, ATP5MG/subunit g, ATP5MK/subunit k, ATP5MJ/subunit j, ATP5F1C/subunit gamma, ATP5F1D/subunit delta, ATP5F1E/subunit epsilon, ATP5PF/subunit F6, ATP5PB/subunit b, ATP5PD/subunit d, ATP5PO/subunit OSCP. ATP synthase complex consists of a soluble F(1) head domain (subunits alpha(3) and beta(3)) - the catalytic core - and a membrane F(0) domain - the membrane proton channel (subunits c, a, 8, e, f, g, k and j). These two domains are linked by a central stalk (subunits gamma, delta, and epsilon) rotating inside the F1 region and a stationary peripheral stalk (subunits F6, b, d, and OSCP). Interacts with DNAJC30; interaction is direct.

Its subcellular location is the mitochondrion inner membrane. It catalyses the reaction H(+)(in) = H(+)(out). In terms of biological role, subunit a, of the mitochondrial membrane ATP synthase complex (F(1)F(0) ATP synthase or Complex V) that produces ATP from ADP in the presence of a proton gradient across the membrane which is generated by electron transport complexes of the respiratory chain. ATP synthase complex consist of a soluble F(1) head domain - the catalytic core - and a membrane F(1) domain - the membrane proton channel. These two domains are linked by a central stalk rotating inside the F(1) region and a stationary peripheral stalk. During catalysis, ATP synthesis in the catalytic domain of F(1) is coupled via a rotary mechanism of the central stalk subunits to proton translocation. With the subunit c (ATP5MC1), forms the proton-conducting channel in the F(0) domain, that contains two crucial half-channels (inlet and outlet) that facilitate proton movement from the mitochondrial intermembrane space (IMS) into the matrix. Protons are taken up via the inlet half-channel and released through the outlet half-channel, following a Grotthuss mechanism. The chain is ATP synthase F(0) complex subunit a from Bos mutus grunniens (Wild yak).